A 920-amino-acid chain; its full sequence is Isoleucine--tRNA ligase (920 aa).

Residues 57-67 carry the 'HIGH' region motif; sequence PYANGDIHLGH. Residue Glu-560 coordinates L-isoleucyl-5'-AMP. A 'KMSKS' region motif is present at residues 601–605; sequence KMSKS. Lys-604 provides a ligand contact to ATP. Zn(2+)-binding residues include Cys-890, Cys-893, Cys-910, and Cys-913.

Belongs to the class-I aminoacyl-tRNA synthetase family. IleS type 1 subfamily. Monomer. Zn(2+) is required as a cofactor.

Its subcellular location is the cytoplasm. The enzyme catalyses tRNA(Ile) + L-isoleucine + ATP = L-isoleucyl-tRNA(Ile) + AMP + diphosphate. Its function is as follows. Catalyzes the attachment of isoleucine to tRNA(Ile). As IleRS can inadvertently accommodate and process structurally similar amino acids such as valine, to avoid such errors it has two additional distinct tRNA(Ile)-dependent editing activities. One activity is designated as 'pretransfer' editing and involves the hydrolysis of activated Val-AMP. The other activity is designated 'posttransfer' editing and involves deacylation of mischarged Val-tRNA(Ile). This Caldicellulosiruptor saccharolyticus (strain ATCC 43494 / DSM 8903 / Tp8T 6331) protein is Isoleucine--tRNA ligase.